A 471-amino-acid chain; its full sequence is UDP-glycosyltransferase CGT (471 aa).

The Proton acceptor role is filled by His24. His24 serves as a coordination point for an anthocyanidin. Asp120 functions as the Charge relay in the catalytic mechanism. Thr143 contributes to the UDP-alpha-D-glucose binding site. The interval 280–281 (SR) is UDP. Val343, Gln345, His360, Trp363, Asn364, Ser365, and Glu368 together coordinate UDP-alpha-D-glucose. Gly383 is a binding site for an anthocyanidin. UDP-alpha-D-glucose-binding residues include Asp384 and Gln385.

Belongs to the UDP-glycosyltransferase family.

The enzyme catalyses a 3'-hydro-2'-hydroxy-beta-oxodihydrochalcone + UDP-alpha-D-glucose = a 3'-(beta-D-glucopyranosyl)-2'-hydroxy-beta-oxodihydrochalcone + UDP + H(+). Its function is as follows. UDP-glucose-dependent glucosyltransferase catalyzing the c-glucosylation of 2-hydroxyflavanones. The chain is UDP-glycosyltransferase CGT from Oryza sativa subsp. japonica (Rice).